A 142-amino-acid chain; its full sequence is MAKKITAYIKLQCPAGAAKPSPPVGPALGQHGLNIMEFCKAFNAQTANMEPASPVPVLISVYADRTFSFELKTPPASYFLKKAAGLQGGSKAPNRDPAVGKVTWAQVEEIAKAKMVDLNANDIEAAKKIIAGSANSMGLEVV.

This sequence belongs to the universal ribosomal protein uL11 family. As to quaternary structure, part of the ribosomal stalk of the 50S ribosomal subunit. Interacts with L10 and the large rRNA to form the base of the stalk. L10 forms an elongated spine to which L12 dimers bind in a sequential fashion forming a multimeric L10(L12)X complex. Post-translationally, one or more lysine residues are methylated.

Forms part of the ribosomal stalk which helps the ribosome interact with GTP-bound translation factors. The polypeptide is Large ribosomal subunit protein uL11 (Magnetococcus marinus (strain ATCC BAA-1437 / JCM 17883 / MC-1)).